A 71-amino-acid chain; its full sequence is UPF0435 protein SE_1565 (71 aa).

This sequence belongs to the UPF0435 family.

In Staphylococcus epidermidis (strain ATCC 12228 / FDA PCI 1200), this protein is UPF0435 protein SE_1565.